A 276-amino-acid chain; its full sequence is Acyl-[acyl-carrier-protein]--UDP-N-acetylglucosamine O-acyltransferase (276 aa).

The protein belongs to the transferase hexapeptide repeat family. LpxA subfamily. As to quaternary structure, homotrimer.

It localises to the cytoplasm. It catalyses the reaction a (3R)-hydroxyacyl-[ACP] + UDP-N-acetyl-alpha-D-glucosamine = a UDP-3-O-[(3R)-3-hydroxyacyl]-N-acetyl-alpha-D-glucosamine + holo-[ACP]. It functions in the pathway glycolipid biosynthesis; lipid IV(A) biosynthesis; lipid IV(A) from (3R)-3-hydroxytetradecanoyl-[acyl-carrier-protein] and UDP-N-acetyl-alpha-D-glucosamine: step 1/6. Involved in the biosynthesis of lipid A, a phosphorylated glycolipid that anchors the lipopolysaccharide to the outer membrane of the cell. The chain is Acyl-[acyl-carrier-protein]--UDP-N-acetylglucosamine O-acyltransferase from Rippkaea orientalis (strain PCC 8801 / RF-1) (Cyanothece sp. (strain PCC 8801)).